The sequence spans 262 residues: Pyridoxine 5'-phosphate synthase (262 aa).

A 3-amino-2-oxopropyl phosphate-binding site is contributed by Asn-6. 8–9 provides a ligand contact to 1-deoxy-D-xylulose 5-phosphate; that stretch reads DH. Arg-17 is a binding site for 3-amino-2-oxopropyl phosphate. The active-site Proton acceptor is His-43. The 1-deoxy-D-xylulose 5-phosphate site is built by Arg-45 and His-50. Glu-70 (proton acceptor) is an active-site residue. Thr-102 provides a ligand contact to 1-deoxy-D-xylulose 5-phosphate. His-215 functions as the Proton donor in the catalytic mechanism. 3-amino-2-oxopropyl phosphate is bound by residues Gly-216 and 237–238; that span reads GH.

The protein belongs to the PNP synthase family. Homooctamer; tetramer of dimers.

It localises to the cytoplasm. The enzyme catalyses 3-amino-2-oxopropyl phosphate + 1-deoxy-D-xylulose 5-phosphate = pyridoxine 5'-phosphate + phosphate + 2 H2O + H(+). It participates in cofactor biosynthesis; pyridoxine 5'-phosphate biosynthesis; pyridoxine 5'-phosphate from D-erythrose 4-phosphate: step 5/5. Its function is as follows. Catalyzes the complicated ring closure reaction between the two acyclic compounds 1-deoxy-D-xylulose-5-phosphate (DXP) and 3-amino-2-oxopropyl phosphate (1-amino-acetone-3-phosphate or AAP) to form pyridoxine 5'-phosphate (PNP) and inorganic phosphate. This is Pyridoxine 5'-phosphate synthase from Helicobacter pylori (strain ATCC 700392 / 26695) (Campylobacter pylori).